The following is a 267-amino-acid chain: Phosphatidylserine decarboxylase proenzyme (267 aa).

Residues D78, H132, and S236 each act as charge relay system; for autoendoproteolytic cleavage activity in the active site. Residue S236 is the Schiff-base intermediate with substrate; via pyruvic acid; for decarboxylase activity of the active site. S236 carries the post-translational modification Pyruvic acid (Ser); by autocatalysis.

This sequence belongs to the phosphatidylserine decarboxylase family. PSD-B subfamily. Prokaryotic type I sub-subfamily. Heterodimer of a large membrane-associated beta subunit and a small pyruvoyl-containing alpha subunit. The cofactor is pyruvate. Post-translationally, is synthesized initially as an inactive proenzyme. Formation of the active enzyme involves a self-maturation process in which the active site pyruvoyl group is generated from an internal serine residue via an autocatalytic post-translational modification. Two non-identical subunits are generated from the proenzyme in this reaction, and the pyruvate is formed at the N-terminus of the alpha chain, which is derived from the carboxyl end of the proenzyme. The autoendoproteolytic cleavage occurs by a canonical serine protease mechanism, in which the side chain hydroxyl group of the serine supplies its oxygen atom to form the C-terminus of the beta chain, while the remainder of the serine residue undergoes an oxidative deamination to produce ammonia and the pyruvoyl prosthetic group on the alpha chain. During this reaction, the Ser that is part of the protease active site of the proenzyme becomes the pyruvoyl prosthetic group, which constitutes an essential element of the active site of the mature decarboxylase.

The protein resides in the cell membrane. The catalysed reaction is a 1,2-diacyl-sn-glycero-3-phospho-L-serine + H(+) = a 1,2-diacyl-sn-glycero-3-phosphoethanolamine + CO2. It participates in phospholipid metabolism; phosphatidylethanolamine biosynthesis; phosphatidylethanolamine from CDP-diacylglycerol: step 2/2. Functionally, catalyzes the formation of phosphatidylethanolamine (PtdEtn) from phosphatidylserine (PtdSer). The protein is Phosphatidylserine decarboxylase proenzyme of Helicobacter pylori (strain ATCC 700392 / 26695) (Campylobacter pylori).